The following is a 557-amino-acid chain: Formate--tetrahydrofolate ligase (557 aa).

Residue 66–73 participates in ATP binding; it reads TPAGEGKS.

It belongs to the formate--tetrahydrofolate ligase family.

It carries out the reaction (6S)-5,6,7,8-tetrahydrofolate + formate + ATP = (6R)-10-formyltetrahydrofolate + ADP + phosphate. The protein operates within one-carbon metabolism; tetrahydrofolate interconversion. The chain is Formate--tetrahydrofolate ligase from Clostridium botulinum (strain Kyoto / Type A2).